We begin with the raw amino-acid sequence, 344 residues long: Dihydroorotate dehydrogenase (quinone) (344 aa).

FMN contacts are provided by residues 61-65 and Thr85; that span reads AGLDK. Lys65 serves as a coordination point for substrate. 110–114 lines the substrate pocket; the sequence is NRMGF. Asn138 and Asn171 together coordinate FMN. Position 171 (Asn171) interacts with substrate. Ser174 functions as the Nucleophile in the catalytic mechanism. Asn176 is a binding site for substrate. The FMN site is built by Lys216 and Thr244. Residue 245–246 participates in substrate binding; that stretch reads NT. FMN-binding positions include Gly267, Gly296, and 317-318; that span reads YS.

It belongs to the dihydroorotate dehydrogenase family. Type 2 subfamily. In terms of assembly, monomer. Requires FMN as cofactor.

The protein resides in the cell membrane. The catalysed reaction is (S)-dihydroorotate + a quinone = orotate + a quinol. The protein operates within pyrimidine metabolism; UMP biosynthesis via de novo pathway; orotate from (S)-dihydroorotate (quinone route): step 1/1. In terms of biological role, catalyzes the conversion of dihydroorotate to orotate with quinone as electron acceptor. This chain is Dihydroorotate dehydrogenase (quinone), found in Psychrobacter arcticus (strain DSM 17307 / VKM B-2377 / 273-4).